A 291-amino-acid polypeptide reads, in one-letter code: Tyramine--L-glutamate ligase (291 aa).

An ATP-grasp domain is found at 104–274; the sequence is KYPVKNLGCS…LAELLIKNAN (171 aa). 131 to 176 provides a ligand contact to ATP; the sequence is KDYVKTPKTFKPKKYVIKKIDGCGGKFNLFDENFLIQEFVEGESLS. Mg(2+)-binding residues include aspartate 236, glutamate 247, and asparagine 249. The Mn(2+) site is built by aspartate 236, glutamate 247, and asparagine 249.

Mg(2+) is required as a cofactor. Mn(2+) serves as cofactor.

The enzyme catalyses tyramine + L-glutamate + ATP = gamma-L-glutamyltyramine + ADP + phosphate + H(+). Its pathway is cofactor biosynthesis; methanofuran biosynthesis. Its function is as follows. Catalyzes the formation of an amide bond between tyramine and the gamma carboxy group of L-glutamate. The enzyme also accepts phenylethylamine in vitro. In Methanocaldococcus fervens (strain DSM 4213 / JCM 15782 / AG86) (Methanococcus fervens), this protein is Tyramine--L-glutamate ligase.